Consider the following 331-residue polypeptide: N-acetyl-alpha-D-glucosaminyl-diphospho-ditrans,octacis-undecaprenol 4-epimerase (331 aa).

Residues 13–14 (FV), 34–39 (QQSHFY), 47–48 (DV), Ser-109, Tyr-132, and Lys-136 contribute to the NAD(+) site. Substrate is bound by residues Ser-109 and Tyr-132. Tyr-132 (proton acceptor) is an active-site residue. Residues 183–184 (GK) and 199–201 (YVG) each bind substrate.

Belongs to the NAD(P)-dependent epimerase/dehydratase family. The cofactor is NAD(+).

The protein resides in the cell membrane. The enzyme catalyses N-acetyl-alpha-D-glucosaminyl-di-trans,octa-cis-undecaprenyl diphosphate = N-acetyl-alpha-D-galactosaminyl-di-trans,octa-cis-undecaprenyl diphosphate. The protein operates within bacterial outer membrane biogenesis; LPS O-antigen biosynthesis. Its function is as follows. Involved in biosynthesis of the repeating tetrasaccharide unit of the O-antigen. Catalyzes the reversible epimerization of the hydroxyl group at position C4 of undecaprenyl pyrophosphate-N-acetylglucosamine (UndPP-GlcNAc) to yield undecaprenyl pyrophosphate-N-acetylgalactosamine (UndPP-GalNAc). This chain is N-acetyl-alpha-D-glucosaminyl-diphospho-ditrans,octacis-undecaprenol 4-epimerase, found in Escherichia coli O157:H7.